A 406-amino-acid polypeptide reads, in one-letter code: Autotransporter heptosyltransferase TibC (406 aa).

Residues Thr107, Leu108, and Gly109 each coordinate ADP-D-glycero-beta-D-manno-heptose. Asp110 serves as the catalytic Proton acceptor. 7 residues coordinate ADP-D-glycero-beta-D-manno-heptose: Gln224, Thr226, Lys230, Arg257, Leu281, Gly302, and Glu326. The Fe(3+) site is built by Cys339, Cys342, Cys358, and Cys370.

Belongs to the glycosyltransferase 9 family. Homododecamer composed of 6 homodimers forming a ring. Fe(3+) is required as a cofactor.

It carries out the reaction ADP-D-glycero-beta-D-manno-heptose + L-seryl-[protein] = O-(D-glycero-alpha-D-manno-heptosyl)-L-seryl-[protein] + ADP + H(+). Glycosylates adhesin TibA. Specifically adds anomer D-glycero-beta-D-manno-heptose. Cannot use ADP-L-glycero-beta-D-manno-heptose as a sugar donor. This Escherichia coli O78:H11 (strain H10407 / ETEC) protein is Autotransporter heptosyltransferase TibC.